The sequence spans 232 residues: MDAVAAEPVSSSTAGLPAQLRDLGQQNYAPVWRAMQRFTDARGEHTADEVWVVEHAPVFTLGQAGKPEHVLAPGEIPVLQVDRGGQVTYHGPGQLVVYPLLDLRRLKIGVRDYVCKIEQALIDTLEEWNIVAERRDGAPGVYVGGAKIAALGIRVRRGCTFHGLSFNVAMDLEPFHRINPCGYQGLQVTSVLDLGGPSGMDAVKAVLLDQLARQFGLVLQPTSALPDLSLPA.

Positions 44-219 (EHTADEVWVV…QLARQFGLVL (176 aa)) constitute a BPL/LPL catalytic domain. Substrate is bound by residues 83-90 (RGGQVTYH), 150-152 (ALG), and 163-165 (GLS). Cys-181 serves as the catalytic Acyl-thioester intermediate.

It belongs to the LipB family.

Its subcellular location is the cytoplasm. It catalyses the reaction octanoyl-[ACP] + L-lysyl-[protein] = N(6)-octanoyl-L-lysyl-[protein] + holo-[ACP] + H(+). The protein operates within protein modification; protein lipoylation via endogenous pathway; protein N(6)-(lipoyl)lysine from octanoyl-[acyl-carrier-protein]: step 1/2. Catalyzes the transfer of endogenously produced octanoic acid from octanoyl-acyl-carrier-protein onto the lipoyl domains of lipoate-dependent enzymes. Lipoyl-ACP can also act as a substrate although octanoyl-ACP is likely to be the physiological substrate. This chain is Octanoyltransferase, found in Xanthomonas euvesicatoria pv. vesicatoria (strain 85-10) (Xanthomonas campestris pv. vesicatoria).